A 226-amino-acid chain; its full sequence is Guanylate kinase (226 aa).

The 181-residue stretch at 13–193 folds into the Guanylate kinase-like domain; that stretch reads GLLLVLSAPS…ALAQLQAIVR (181 aa). An ATP-binding site is contributed by 20-27; that stretch reads APSGAGKT.

This sequence belongs to the guanylate kinase family.

The protein resides in the cytoplasm. The catalysed reaction is GMP + ATP = GDP + ADP. Its function is as follows. Essential for recycling GMP and indirectly, cGMP. The protein is Guanylate kinase of Anaeromyxobacter dehalogenans (strain 2CP-C).